Here is a 407-residue protein sequence, read N- to C-terminus: Lymphocyte transmembrane adapter 1 (407 aa).

Residues 1–25 (MYSTPAPPEVTRRNSEPSTRQGTLG) are disordered. Residues 1-33 (MYSTPAPPEVTRRNSEPSTRQGTLGSLQGEKGQ) are Extracellular-facing. The span at 16–25 (EPSTRQGTLG) shows a compositional bias: polar residues. Residues 34 to 54 (IIFPGFVVLLTIILVIIAACI) traverse the membrane as a helical; Signal-anchor for type III membrane protein segment. Residues 55–407 (LWSWKKQKKR…LATETSDEDA (353 aa)) are Cytoplasmic-facing. A disordered region spans residues 109-131 (ESLLSRASDSPEPEAPQANGSLQ). Tyrosine 185, tyrosine 260, tyrosine 286, and tyrosine 353 each carry phosphotyrosine. A disordered region spans residues 331–388 (SAQSEDSAMVHREEQSSEDSSDYETVLVAELEGRDWKQGPGTQHPSDEGTPGDLAGKL).

In terms of assembly, when phosphorylated, interacts with GRB2, PIK3R1 and GRAP2. Phosphorylated on tyrosines upon TCR or BCR activation; which leads to the recruitment of GRB2, PIK3R1 and GRAP2. As to expression, expressed in T-cells and B-cells.

Its subcellular location is the cell membrane. In terms of biological role, negatively regulates TCR (T-cell antigen receptor)-mediated signaling in T-cells and BCR (B-cell antigen receptor)-mediated signaling in B-cells. The sequence is that of Lymphocyte transmembrane adapter 1 (Lax1) from Mus musculus (Mouse).